We begin with the raw amino-acid sequence, 353 residues long: Photosystem II D2 protein (353 aa).

The residue at position 2 (threonine 2) is an N-acetylthreonine. Threonine 2 is subject to Phosphothreonine. The helical transmembrane segment at 41–61 (CAYFAVGGWFTGTTFVTSWYT) threads the bilayer. Position 118 (histidine 118) interacts with chlorophyll a. The chain crosses the membrane as a helical span at residues 125–141 (GFMLRQFELARSVQLRP). Pheophytin a is bound by residues glutamine 130 and asparagine 143. The helical transmembrane segment at 153–166 (VFVSVFLIYPLGQS) threads the bilayer. Histidine 198 contributes to the chlorophyll a binding site. Residues 208-228 (AALLCAIHGATVENTLFEDGD) traverse the membrane as a helical segment. A plastoquinone contacts are provided by histidine 215 and phenylalanine 262. Residue histidine 215 participates in Fe cation binding. Histidine 269 lines the Fe cation pocket. A helical transmembrane segment spans residues 279–295 (GLWMSALGVVGLALNLR).

This sequence belongs to the reaction center PufL/M/PsbA/D family. As to quaternary structure, PSII is composed of 1 copy each of membrane proteins PsbA, PsbB, PsbC, PsbD, PsbE, PsbF, PsbH, PsbI, PsbJ, PsbK, PsbL, PsbM, PsbT, PsbX, PsbY, PsbZ, Psb30/Ycf12, at least 3 peripheral proteins of the oxygen-evolving complex and a large number of cofactors. It forms dimeric complexes. It depends on The D1/D2 heterodimer binds P680, chlorophylls that are the primary electron donor of PSII, and subsequent electron acceptors. It shares a non-heme iron and each subunit binds pheophytin, quinone, additional chlorophylls, carotenoids and lipids. There is also a Cl(-1) ion associated with D1 and D2, which is required for oxygen evolution. The PSII complex binds additional chlorophylls, carotenoids and specific lipids. as a cofactor.

Its subcellular location is the plastid. It localises to the chloroplast thylakoid membrane. The enzyme catalyses 2 a plastoquinone + 4 hnu + 2 H2O = 2 a plastoquinol + O2. Photosystem II (PSII) is a light-driven water:plastoquinone oxidoreductase that uses light energy to abstract electrons from H(2)O, generating O(2) and a proton gradient subsequently used for ATP formation. It consists of a core antenna complex that captures photons, and an electron transfer chain that converts photonic excitation into a charge separation. The D1/D2 (PsbA/PsbD) reaction center heterodimer binds P680, the primary electron donor of PSII as well as several subsequent electron acceptors. D2 is needed for assembly of a stable PSII complex. The chain is Photosystem II D2 protein from Guizotia abyssinica (Niger).